The primary structure comprises 366 residues: GTP cyclohydrolase 1 type 2 homolog (366 aa).

5 residues coordinate a divalent metal cation: His64, His65, Asp102, His326, and Glu329.

Belongs to the GTP cyclohydrolase I type 2/NIF3 family. Homohexamer.

The chain is GTP cyclohydrolase 1 type 2 homolog from Staphylococcus epidermidis (strain ATCC 35984 / DSM 28319 / BCRC 17069 / CCUG 31568 / BM 3577 / RP62A).